Here is a 307-residue protein sequence, read N- to C-terminus: Delta-9 acyl-lipid desaturase 2 (307 aa).

A compositionally biased stretch (polar residues) spans 1 to 17 (MSVTSTVEENHQKNPST). Positions 1-21 (MSVTSTVEENHQKNPSTPAAV) are disordered. Residues 53–73 (LALLAPFYFTWSALWVTFLFY) traverse the membrane as a helical segment. Histidine 85 and histidine 90 together coordinate Fe cation. Positions 85 to 90 (HRNLAH) match the Histidine box-1 motif. A helical membrane pass occupies residues 99–119 (LEYLLAYCALLAIQGDPIDWV). The Fe cation site is built by histidine 122, histidine 125, and histidine 126. The short motif at 122–126 (HRYHH) is the Histidine box-2 element. 2 helical membrane passes run 182-202 (VLFH…MSFV) and 204-224 (WGMG…NSLC). Fe cation-binding residues include histidine 225, histidine 254, histidine 257, and histidine 258. A Histidine box-3 motif is present at residues 254-258 (HNNHH).

This sequence belongs to the fatty acid desaturase type 1 family. Requires Fe cation as cofactor. In terms of tissue distribution, strongly expressed in flowers, roots, leaves, seedpods, and inflorescence meristems.

The protein localises to the endoplasmic reticulum membrane. It catalyses the reaction a 1-hexacosanoyl-2-acyl-phosphoglycerolipid + 2 Fe(II)-[cytochrome b5] + O2 + 2 H(+) = a 1-[(17Z)-hexacos-17-enoyl]-2-acyl-phosphoglycerolipid + 2 Fe(III)-[cytochrome b5] + 2 H2O. The catalysed reaction is a 1-tetracosanoyl-2-acyl-phosphoglycerolipid + 2 Fe(II)-[cytochrome b5] + O2 + 2 H(+) = a 1-[(15Z)-tetracos-15-enoyl]-2-acyl-phosphoglycerolipid + 2 Fe(III)-[cytochrome b5] + 2 H2O. It functions in the pathway lipid metabolism; polyunsaturated fatty acid biosynthesis. In terms of biological role, involved in delta-9 desaturation of fatty acids. Plays a role in the production of very-long-chain monounsaturated fatty acids (VLCMUFAs) in seed lipids and in membrane phospholipids and sphingolipids. Acts as C-16:0 desaturase for monogalactosyl diacylglycerol (MGDG) and phosphatidylglycerol (PG). Is an essential component for cold adaptation. Is essential to adjust the acyl composition of organelle membrane lipid composition in response to cold stress. This chain is Delta-9 acyl-lipid desaturase 2, found in Arabidopsis thaliana (Mouse-ear cress).